A 118-amino-acid chain; its full sequence is D-dopachrome decarboxylase-B (118 aa).

At P2 the chain carries N-acetylproline.

The protein belongs to the MIF family. As to quaternary structure, homotrimer.

It is found in the cytoplasm. The enzyme catalyses D-dopachrome + H(+) = 5,6-dihydroxyindole + CO2. Tautomerization of D-dopachrome with decarboxylation to give 5,6-dihydroxyindole (DHI). The sequence is that of D-dopachrome decarboxylase-B (ddt-b) from Xenopus laevis (African clawed frog).